The following is a 291-amino-acid chain: NAD kinase (291 aa).

Aspartate 73 (proton acceptor) is an active-site residue. Residues 73 to 74 (DG), 147 to 148 (ND), arginine 175, aspartate 177, 188 to 193 (TAYALS), alanine 212, and glutamine 246 each bind NAD(+).

The protein belongs to the NAD kinase family. A divalent metal cation is required as a cofactor.

The protein resides in the cytoplasm. It carries out the reaction NAD(+) + ATP = ADP + NADP(+) + H(+). Involved in the regulation of the intracellular balance of NAD and NADP, and is a key enzyme in the biosynthesis of NADP. Catalyzes specifically the phosphorylation on 2'-hydroxyl of the adenosine moiety of NAD to yield NADP. In Polaromonas sp. (strain JS666 / ATCC BAA-500), this protein is NAD kinase.